Reading from the N-terminus, the 543-residue chain is Malate synthase (543 aa).

The Proton acceptor role is filled by R162. D449 serves as the catalytic Proton donor.

This sequence belongs to the malate synthase family.

The enzyme catalyses glyoxylate + acetyl-CoA + H2O = (S)-malate + CoA + H(+). It functions in the pathway carbohydrate metabolism; glyoxylate cycle; (S)-malate from isocitrate: step 2/2. This is Malate synthase (masA) from Dictyostelium discoideum (Social amoeba).